The chain runs to 233 residues: LexA repressor (233 aa).

The H-T-H motif DNA-binding region spans 26 to 46 (FDEMKDALDLRSKSGIHRLIT). Residues serine 154 and lysine 192 each act as for autocatalytic cleavage activity in the active site.

The protein belongs to the peptidase S24 family. Homodimer.

It catalyses the reaction Hydrolysis of Ala-|-Gly bond in repressor LexA.. In terms of biological role, represses a number of genes involved in the response to DNA damage (SOS response), including recA and lexA. In the presence of single-stranded DNA, RecA interacts with LexA causing an autocatalytic cleavage which disrupts the DNA-binding part of LexA, leading to derepression of the SOS regulon and eventually DNA repair. In Nitrobacter hamburgensis (strain DSM 10229 / NCIMB 13809 / X14), this protein is LexA repressor.